The primary structure comprises 249 residues: Ribosomal RNA small subunit methyltransferase J (249 aa).

Residues 101-102 (RD), 117-118 (ER), 153-154 (SS), and Asp171 contribute to the S-adenosyl-L-methionine site.

Belongs to the methyltransferase superfamily. RsmJ family.

It localises to the cytoplasm. It catalyses the reaction guanosine(1516) in 16S rRNA + S-adenosyl-L-methionine = N(2)-methylguanosine(1516) in 16S rRNA + S-adenosyl-L-homocysteine + H(+). Functionally, specifically methylates the guanosine in position 1516 of 16S rRNA. In Salmonella arizonae (strain ATCC BAA-731 / CDC346-86 / RSK2980), this protein is Ribosomal RNA small subunit methyltransferase J.